A 605-amino-acid polypeptide reads, in one-letter code: Elongation factor 4 (605 aa).

Positions 11–193 (KRIRNFSIIA…KVVSNIPSPR (183 aa)) constitute a tr-type G domain. GTP is bound by residues 23 to 28 (DHGKST) and 140 to 143 (NKID).

Belongs to the TRAFAC class translation factor GTPase superfamily. Classic translation factor GTPase family. LepA subfamily.

It is found in the cell membrane. The catalysed reaction is GTP + H2O = GDP + phosphate + H(+). In terms of biological role, required for accurate and efficient protein synthesis under certain stress conditions. May act as a fidelity factor of the translation reaction, by catalyzing a one-codon backward translocation of tRNAs on improperly translocated ribosomes. Back-translocation proceeds from a post-translocation (POST) complex to a pre-translocation (PRE) complex, thus giving elongation factor G a second chance to translocate the tRNAs correctly. Binds to ribosomes in a GTP-dependent manner. This is Elongation factor 4 from Phytoplasma mali (strain AT).